The sequence spans 306 residues: MAAAAAAAAAAGAAGGRGSGPGRRRHLVPGAGGEAGEGAPGGAGDYGNGLESEELEPEELLLEPEPEPEPEEEPPRPRAPPGAPGPGPGSGAPGNQEEEEESGLVEGDPGDGAIEDPELEAIKARVREMEEEAEKLKELQNEVEKQMNMSPPPGNAGPVIMSIEEKMEADARSIYVGNVDYGATAEELEAHFHGCGSVNRVTILCDKFSGHPKGFAYIEFSDKESVRTSLALDESLFRGRQIKVIPKRTNRPGISTTDRGFPRARYRARTTNYNSSRSRFYSGFNSRPRGRVYRGRARATSWYSPY.

The segment covering 1–12 (MAAAAAAAAAAG) has biased composition (low complexity). The tract at residues 1-115 (MAAAAAAAAA…EGDPGDGAIE (115 aa)) is disordered. The residue at position 2 (Ala2) is an N-acetylalanine. The interaction with SKIP stretch occupies residues 2 to 145 (AAAAAAAAAA…LKELQNEVEK (144 aa)). Position 17 is an omega-N-methylarginine (Arg17). Ser19 carries the phosphoserine modification. Positions 30–47 (GAGGEAGEGAPGGAGDYG) are enriched in gly residues. Residues 51-72 (ESEELEPEELLLEPEPEPEPEE) show a composition bias toward acidic residues. Position 52 is a phosphoserine (Ser52). Over residues 77 to 87 (PRAPPGAPGPG) the composition is skewed to pro residues. Residues 115-151 (EDPELEAIKARVREMEEEAEKLKELQNEVEKQMNMSP) are a coiled coil. A stimulates PAPOLA region spans residues 119-147 (LEAIKARVREMEEEAEKLKELQNEVEKQM). Phosphoserine occurs at positions 150 and 235. Residues 155–306 (NAGPVIMSIE…ARATSWYSPY (152 aa)) are necessary for homooligomerization. Positions 172-249 (RSIYVGNVDY…RQIKVIPKRT (78 aa)) constitute an RRM domain. Arg238, Arg259, and Arg263 each carry asymmetric dimethylarginine; alternate. Omega-N-methylarginine; alternate occurs at positions 238, 259, and 263. 11 positions are modified to asymmetric dimethylarginine: Arg265, Arg267, Arg269, Arg277, Arg279, Arg287, Arg289, Arg291, Arg294, Arg296, and Arg298. The interaction with PAPOLA stretch occupies residues 286–306 (SRPRGRVYRGRARATSWYSPY).

As to quaternary structure, monomer and homooligomer. Binds RNA as a monomer and oligomerizes when bound to poly(A). Associates in a ternary complex with CPSF4 and NS/NS1 and interaction with NS/NS1, blocks nuclear export of host cell mRNAs. Associates in a single complex with SKIP and MYOD1 and interacts with SKIP in differentiated myocytes. Interacts with NUDT21/CPSF5. Identified in a IGF2BP1-dependent mRNP granule complex containing untranslated mRNAs. Interacts with PAPOLA, but only in presence of oligo(A) RNA. Interacts with transportin. May interact with SETX. Interacts (via RRM domain and C-terminal arginine-rich region) with ZFP36 (via hypophosphorylated form); this interaction occurs in the nucleus in a RNA-independent manner, decreases in presence of single-stranded poly(A) RNA-oligomer and in a p38-dependent-manner and may down-regulated RNA poly(A) polymerase activity. Component of the poly(A) tail exosome targeting (PAXT) complex composed of PABPN1, ZFC3H1 and MTREX. Interacts with ZFC3H1 in a RNase-insensitive manner. Interacts with FRG1. Interacts with ZC3H11A. In terms of processing, arginine dimethylation is asymmetric and involves PRMT1 and PRMT3. It does not influence the RNA binding properties. Ubiquitous.

It localises to the nucleus. The protein resides in the cytoplasm. Its subcellular location is the nucleus speckle. Functionally, involved in the 3'-end formation of mRNA precursors (pre-mRNA) by the addition of a poly(A) tail of 200-250 nt to the upstream cleavage product. Stimulates poly(A) polymerase (PAPOLA) conferring processivity on the poly(A) tail elongation reaction and also controls the poly(A) tail length. Increases the affinity of poly(A) polymerase for RNA. Is also present at various stages of mRNA metabolism including nucleocytoplasmic trafficking and nonsense-mediated decay (NMD) of mRNA. Cooperates with SKIP to synergistically activate E-box-mediated transcription through MYOD1 and may regulate the expression of muscle-specific genes. Binds to poly(A) and to poly(G) with high affinity. May protect the poly(A) tail from degradation. Subunit of the trimeric poly(A) tail exosome targeting (PAXT) complex, a complex that directs a subset of long and polyadenylated poly(A) RNAs for exosomal degradation. The RNA exosome is fundamental for the degradation of RNA in eukaryotic nuclei. Substrate targeting is facilitated by its cofactor MTREX, which links to RNA-binding protein adapters. The polypeptide is Polyadenylate-binding protein 2 (PABPN1) (Bos taurus (Bovine)).